We begin with the raw amino-acid sequence, 255 residues long: Pimeloyl-[acyl-carrier protein] methyl ester esterase (255 aa).

Residues Trp-18, 78–79 (SL), and 139–143 (FLALD) each bind substrate. Ser-78 functions as the Nucleophile in the catalytic mechanism. Residues Asp-203 and His-233 contribute to the active site. His-233 is a binding site for substrate.

This sequence belongs to the AB hydrolase superfamily. Carboxylesterase BioH family. Monomer.

Its subcellular location is the cytoplasm. The catalysed reaction is 6-carboxyhexanoyl-[ACP] methyl ester + H2O = 6-carboxyhexanoyl-[ACP] + methanol + H(+). Its pathway is cofactor biosynthesis; biotin biosynthesis. The physiological role of BioH is to remove the methyl group introduced by BioC when the pimeloyl moiety is complete. It allows to synthesize pimeloyl-ACP via the fatty acid synthetic pathway through the hydrolysis of the ester bonds of pimeloyl-ACP esters. The protein is Pimeloyl-[acyl-carrier protein] methyl ester esterase of Xylella fastidiosa (strain 9a5c).